A 235-amino-acid polypeptide reads, in one-letter code: Aspartate/glutamate leucyltransferase (235 aa).

Belongs to the R-transferase family. Bpt subfamily.

Its subcellular location is the cytoplasm. The catalysed reaction is N-terminal L-glutamyl-[protein] + L-leucyl-tRNA(Leu) = N-terminal L-leucyl-L-glutamyl-[protein] + tRNA(Leu) + H(+). It catalyses the reaction N-terminal L-aspartyl-[protein] + L-leucyl-tRNA(Leu) = N-terminal L-leucyl-L-aspartyl-[protein] + tRNA(Leu) + H(+). In terms of biological role, functions in the N-end rule pathway of protein degradation where it conjugates Leu from its aminoacyl-tRNA to the N-termini of proteins containing an N-terminal aspartate or glutamate. This is Aspartate/glutamate leucyltransferase from Pseudomonas putida (strain ATCC 700007 / DSM 6899 / JCM 31910 / BCRC 17059 / LMG 24140 / F1).